The chain runs to 128 residues: 3-aminoacrylate deaminase RutC (128 aa).

The protein belongs to the RutC family.

The enzyme catalyses (Z)-3-aminoacrylate + H2O + H(+) = 3-oxopropanoate + NH4(+). Functionally, involved in pyrimidine catabolism. Catalyzes the deamination of 3-aminoacrylate to malonic semialdehyde, a reaction that can also occur spontaneously. RutC may facilitate the reaction and modulate the metabolic fitness, rather than catalyzing essential functions. The chain is 3-aminoacrylate deaminase RutC from Agrobacterium fabrum (strain C58 / ATCC 33970) (Agrobacterium tumefaciens (strain C58)).